A 578-amino-acid polypeptide reads, in one-letter code: Ribonuclease SLFN12 (578 aa).

Phosphoserine is present on serine 368. A mediates interaction with PDE3A region spans residues 551–560 (AENLYQIIGI). Residue serine 573 is modified to Phosphoserine.

The protein belongs to the Schlafen family. Subgroup II subfamily. In terms of assembly, homodimer. Interacts with PDE3A; direct low affinity interaction which is stimulated by binding of 17beta-estradiol/E2 to PDE3A and that positively regulates the ribonuclease activity of SLFN12. Interacts with SERPINB12; as part of a pathway regulating cell differentiation. Phosphorylation at Ser-368 and Ser-573 negatively regulates the ribonuclease activity. Dephosphorylation is induced by the interaction with PDE3A and stimulates the rRNA ribonuclease activity.

The protein resides in the nucleus. Its subcellular location is the cytoplasm. It is found in the cytosol. Its function is as follows. Ribonuclease which is part of an E2/17beta-estradiol-induced pro-apoptotic signaling pathway. E2 stabilizes the PDE3A/SLFN12 complex in the cytosol, promoting the dephosphorylation of SLFN12 and activating its pro-apoptotic ribosomal RNA/rRNA ribonuclease activity. This apoptotic pathway might be relevant in tissues with high concentration of E2 and be for instance involved in placenta remodeling. May play a role in cell differentiation. This is Ribonuclease SLFN12 from Homo sapiens (Human).